The primary structure comprises 560 residues: Bifunctional NAD(P)H-hydrate repair enzyme (560 aa).

An NAD(P)H-hydrate epimerase region spans residues M1–A241. The YjeF N-terminal domain maps to L29–A235. Positions N77–D81 are NADPHX 1; for epimerase activity. 2 residues coordinate K(+): N78 and D145. The NADPHX 1; for epimerase activity stretch occupies residues G149–P155. Residues Y160 and D178 each contribute to the (6S)-NADPHX site. S181 is a K(+) binding site. The region spanning L249 to S547 is the YjeF C-terminal domain. The interval L249–P560 is ADP-dependent (S)-NAD(P)H-hydrate dehydratase. A (6S)-NADPHX-binding site is contributed by G351. Positions H417–R423 are NADPHX 2; for dehydratase activity. Residues K454–T458 and N475–G484 each bind ADP. (6S)-NADPHX is bound at residue D485.

In the N-terminal section; belongs to the NnrE/AIBP family. It in the C-terminal section; belongs to the NnrD/CARKD family. It depends on K(+) as a cofactor.

The catalysed reaction is (6S)-NADHX + ADP = AMP + phosphate + NADH + H(+). It catalyses the reaction (6S)-NADPHX + ADP = AMP + phosphate + NADPH + H(+). The enzyme catalyses (6R)-NADHX = (6S)-NADHX. It carries out the reaction (6R)-NADPHX = (6S)-NADPHX. Functionally, bifunctional enzyme that catalyzes the epimerization of the S- and R-forms of NAD(P)HX and the dehydration of the S-form of NAD(P)HX at the expense of ADP, which is converted to AMP. This allows the repair of both epimers of NAD(P)HX, a damaged form of NAD(P)H that is a result of enzymatic or heat-dependent hydration. The protein is Bifunctional NAD(P)H-hydrate repair enzyme of Leishmania infantum.